The primary structure comprises 7094 residues: Replicase polyprotein 1ab (7094 aa).

The CoV Nsp1 globular domain maps to 54–196; the sequence is PENHVMVDCR…PWVMYLRKCG (143 aa). A BetaCoV Nsp1 C-terminal domain is found at 216–246; it reads FKVEDAYDLVHDEPKGKFSKKAYALIRGYRG. Positions 250–519 constitute a CoV Nsp2 N-terminal domain; the sequence is LLYVDQYGCD…LICKALYLDY (270 aa). Residues cysteine 392, cysteine 397, cysteine 413, and cysteine 416 each coordinate Zn(2+). The C4 stretch occupies residues 392 to 416; it reads CEQDLCDFKGWVPGNMIDGFACTTC. A CoV Nsp2 middle domain is found at 524 to 713; that stretch reads CGNLHQRELL…AQAFRSVAKV (190 aa). The 119-residue stretch at 733–851 folds into the CoV Nsp2 C-terminal domain; sequence RRRICLSGSK…LDQAWRVPCA (119 aa). Residues 853-966 form the Ubiquitin-like 1 domain; sequence RRVTFKEQPT…LYCAFTAPED (114 aa). A Peptidase C16 1 domain is found at 1036–1274; the sequence is DLESVIQDYE…IAQLYGSCIT (239 aa). The For PL1-PRO activity role is filled by cysteine 1074. Positions 1151, 1154, 1177, and 1179 each coordinate Zn(2+). A C4-type 1 zinc finger spans residues 1151 to 1179; sequence CIKCDLALKLKGLDAMFFYGDVVSHVCKC. Catalysis depends on for PL1-PRO activity residues histidine 1225 and aspartate 1236. The region spanning 1275–1435 is the Macro domain; the sequence is PNVCFVKGDI…LISKCQITAV (161 aa). The region spanning 1491–1563 is the DPUP domain; sequence DDARTFVQSN…VAQIKALFLD (73 aa). Residues 1562–1617 enclose the Ubiquitin-like 2 domain; that stretch reads LDKVDILLTVDGVNFTNRFVPVGENFGKSLGNVFCDGVNVTKHKCDINYKGKVFFQ. A Peptidase C16 2 domain is found at 1631–1892; that stretch reads SSFNFDQKEL…KIEYKPDLSQ (262 aa). Cysteine 1671 serves as the catalytic For PL2-PRO activity. Residues cysteine 1749, cysteine 1751, cysteine 1783, and cysteine 1785 each coordinate Zn(2+). The segment at 1749–1785 adopts a C4-type 2 zinc-finger fold; sequence CKCGVKQEQRTGVDAVMHFGTLSREDLEIGYTVDCSC. Residues histidine 1828 and aspartate 1842 each act as for PL2-PRO activity in the active site. The 102-residue stretch at 1906 to 2007 folds into the Nucleic acid-binding domain; that stretch reads IKAQFKTFEK…TYFNRPLLVD (102 aa). Positions 2020 to 2169 constitute a G2M domain; that stretch reads DDGGDISESD…ADNKVIYTTE (150 aa). The next 3 membrane-spanning stretches (helical) occupy residues 2138-2158, 2199-2219, and 2227-2247; these read ISACFNFIKWLFVLLFGWIKI, ACIIATIFLLWFNFIYANVIF, and IGFLPTFVGKIAQWIKSTFSL. Positions 2138–2385 are HD1; the sequence is ISACFNFIKW…ASFIKLFSLF (248 aa). Residues 2235–2296 form the 3Ecto domain; the sequence is GKIAQWIKST…AIDVVQYEAD (62 aa). 2 disulfide bridges follow: cysteine 2251–cysteine 2275 and cysteine 2266–cysteine 2272. 3 helical membrane-spanning segments follow: residues 2313–2333, 2343–2363, and 2365–2385; these read LIVSYALYTAWFYPLFALISI, LFMLSTLHWSVRLLVSLANML, and AHVFMRFYIIIASFIKLFSLF. The tract at residues 2383-2473 is Y1; sequence SLFRHVAYGC…ELKRPIQPTD (91 aa). One can recognise a CoV Nsp3 Y domain in the interval 2383 to 2750; that stretch reads SLFRHVAYGC…LTTPFSLKGG (368 aa). Histidine 2387, cysteine 2392, cysteine 2397, cysteine 2400, cysteine 2433, histidine 2436, cysteine 2440, and cysteine 2443 together coordinate Zn(2+). Residues 2387–2400 form a ZF1 region; sequence HVAYGCSKPGCLFC. Residues 2433–2443 are ZF2; it reads CSKHQWNCIDC. Residues 2474–2566 form a Y2 region; it reads VAYHTVTDVK…MVDKNLITTA (93 aa). A coV-Y region spans residues 2474-2750; that stretch reads VAYHTVTDVK…LTTPFSLKGG (277 aa). Positions 2567–2649 are Y3; it reads NTGTSVTETM…DSVMSAVSAG (83 aa). Positions 2650-2750 are Y4; that stretch reads LELTDESCNN…LTTPFSLKGG (101 aa). Helical transmembrane passes span 2752–2772, 2824–2844, 3009–3029, 3031–3051, 3063–3083, 3090–3110, and 3115–3135; these read VFSYFVYVCFLLSLVCFIGLW, STFGLSYYSNSMACPIVVAVV, VFDLIYQLFKGLAQPVDFLAL, ASSIAGAILAVIVVLVFYYLI, IVFVNVIVWCVNFMMLFVFQV, VYAICYFYATLYFPSEISVIM, and LVMYGTIMPLWFCLLYISVVV. The interval 2752–3135 is HD2; it reads VFSYFVYVCF…FCLLYISVVV (384 aa). The region spanning 3149 to 3246 is the Nsp4C domain; it reads LGTSVRSDGT…TASVSTSFLQ (98 aa). The Peptidase C30 domain maps to 3247 to 3549; that stretch reads SGIVKMVNPT…YQQLAGIKLQ (303 aa). Residues histidine 3287 and cysteine 3391 each act as for 3CL-PRO activity in the active site. The next 7 membrane-spanning stretches (helical) occupy residues 3558–3578, 3588–3608, 3614–3634, 3657–3677, 3684–3704, 3711–3731, and 3755–3775; these read GIVCWIMASTFLFSCIITAFV, TNMLSITFCALCVISLAMLLV, YLTMYIIPVLFTLLYNNYLVV, TYTDEVIYGMLLLIGMVFVTL, LFSFIMFVGRVISVVSLWYMG, ILLMLASLFGTYTWTTALSMA, and IVLVCYLFIGYIISCYWGLFS. The HD3 stretch occupies residues 3558 to 3775; it reads GIVCWIMAST…IISCYWGLFS (218 aa). The RdRp Nsp7 cofactor domain occupies 3837–3925; the sequence is SKLTDVKCAN…DYAKDNTVLQ (89 aa). A RdRp Nsp8 cofactor domain is found at 3926–4122; that stretch reads ALQSEFVNMA…HNEVSATVLQ (197 aa). Positions 4123–4232 constitute a Nsp9 ssRNA-binding domain; the sequence is NNELMPAKLK…GTISSTVRLQ (110 aa). Residues 4233–4370 form the ExoN/MTase coactivator domain; that stretch reads AGTATEYASN…CVSTDTTVQS (138 aa). 8 residues coordinate Zn(2+): cysteine 4306, cysteine 4309, histidine 4315, cysteine 4322, cysteine 4348, cysteine 4351, cysteine 4359, and cysteine 4361. 2 zinc fingers span residues 4306 to 4322 and 4348 to 4361; these read CIYCRARVEHPDVDGLC and CQVCGFWRDGSCSC. The region spanning 4375–4630 is the NiRAN domain; it reads FLNRVRGTSV…DCELYVNNAY (256 aa). Asparagine 4578 and aspartate 4587 together coordinate Mn(2+). Residues 4631-4729 form the Nsp12 Interface domain; it reads RLFDLVQYDF…MNMDVDTHRY (99 aa). Histidine 4660, cysteine 4666, cysteine 4671, cysteine 4675, and cysteine 4852 together coordinate Zn(2+). A Nsp12 RNA-dependent RNA polymerase domain is found at 4730–5297; that stretch reads RLSLKDLLLY…NMYLRSAVMQ (568 aa). Residues 4732-4946 are rdRp Fingers N-ter; sequence SLKDLLLYAA…HQKCLKSIAA (215 aa). The segment at 4947 to 4985 is rdRp Palm N-ter; that stretch reads TRGVPVVIGTTKFYGGWDDMLRRLIKDVDNPVLMGWDYP. Positions 4977-5139 constitute a RdRp catalytic domain; that stretch reads PVLMGWDYPK…CYNSDYASKG (163 aa). The segment at 4986–5044 is rdRp Fingers C-ter; it reads KCDRAMPNILRIVSSLVLARKHEACCSQSDRFYRLANECAQVLSEIVMCGGCYYVKPGG. Histidine 5007, cysteine 5010, and cysteine 5011 together coordinate Zn(2+). The interval 5045–5180 is rdRp Palm C-ter; the sequence is TSSGDATTAF…NNGPHEFCSQ (136 aa). Active-site residues include serine 5124, aspartate 5125, and aspartate 5126. Positions 5181-5297 are rdRp Thumb; sequence HTMLVKMDGD…NMYLRSAVMQ (117 aa). A CV ZBD domain is found at 5298–5410; that stretch reads SVGACVVCSS…DDFNRIASCK (113 aa). 12 residues coordinate Zn(2+): cysteine 5302, cysteine 5305, cysteine 5313, cysteine 5316, cysteine 5323, cysteine 5326, histidine 5330, histidine 5336, cysteine 5347, cysteine 5352, cysteine 5369, and histidine 5372. Residues 5553 to 5734 form the (+)RNA virus helicase ATP-binding domain; that stretch reads SVLETFQNNV…MCCLGPDIFL (182 aa). 5578–5585 is an ATP binding site; it reads GPPGTGKS. Residues 5735–5904 enclose the (+)RNA virus helicase C-terminal domain; that stretch reads GTCYRCPKEI…VETRVQCSTN (170 aa). The ExoN domain occupies 5971-6186; that stretch reads LFITKEEAVK…RCLAVYDCFC (216 aa). Residues aspartate 5989, glutamate 5991, and glutamate 6090 contribute to the active site. Cysteine 6106, cysteine 6109, cysteine 6125, histidine 6128, histidine 6156, cysteine 6160, and histidine 6163 together coordinate Zn(2+). Active-site residues include histidine 6167 and aspartate 6172. Cysteine 6178 is a binding site for Zn(2+). Residues 6195-6421 enclose the N7-MTase domain; that stretch reads YPIISNELSI…NLWNTFTKLQ (227 aa). 6230–6236 is an S-adenosyl-L-methionine binding site; the sequence is DIGNPKA. Residues 6308–6322 are gpppA-binding; it reads CNGGSLYVNKHAFHT. Zn(2+) is bound by residues cysteine 6346, cysteine 6367, cysteine 6378, and histidine 6381. The Nsp15 N-terminal oligomerization domain maps to 6422–6482; the sequence is SLENVVYNLV…NVAVELFAKR (61 aa). The AV-Nsp11N/CoV-Nsp15M domain maps to 6483–6603; the sequence is SIRHHPELKL…FAVRKEGQDV (121 aa). A NendoU domain is found at 6653 to 6792; it reads TCRTDMEKDF…NDEKVMTFYP (140 aa). Residues histidine 6683, histidine 6698, lysine 6738, lysine 6841, aspartate 6925, lysine 6965, and glutamate 6998 contribute to the active site. The 295-residue stretch at 6797 to 7091 folds into the Nidovirus-type SAM-dependent 2'-O-MTase domain; sequence ASDWKPGYSM…KEVFVGDSLV (295 aa).

The protein belongs to the coronaviruses polyprotein 1ab family. As to quaternary structure, interacts with host PHB and PHB2. In terms of assembly, interacts with papain-like protease nsp3 and non-structural protein 6. Monomer. Homodimer. Only the homodimer shows catalytic activity. As to quaternary structure, interacts with nsp8 and nsp12 to form the replication-transcription complex (RTC): nsp12, nsp7, two subunits of nsp8, and up to two subunits of nsp13. In terms of assembly, interacts with nsp7, nsp13 and nsp12 to form the replication-transcription complex (RTC): nsp12, nsp7, two subunits of nsp8, and up to two subunits of nsp13. Interacts with nsp12. As to quaternary structure, interacts with proofreading exoribonuclease nsp14 and 2'-O-methyltransferase nsp16; these interactions enhance nsp14 and nsp16 enzymatic activities. In terms of assembly, interacts with nsp7 and nsp8 to form the replication-transcription complex (RTC): nsp12, nsp7, two subunits of nsp8, and up to two subunits of nsp13. Interacts with nsp9. Interacts with nsp8 to form the replication-transcription complex (RTC): nsp12, nsp7, two subunits of nsp8, and up to two subunits of nsp13. Requires Mn(2+) as cofactor. The cofactor is Mg(2+). Specific enzymatic cleavages in vivo by its own proteases yield mature proteins. 3CL-PRO and PL-PRO proteinases are autocatalytically processed.

It localises to the host membrane. The protein resides in the host cytoplasm. The protein localises to the host perinuclear region. It is found in the host endoplasmic reticulum-Golgi intermediate compartment. The enzyme catalyses RNA(n) + a ribonucleoside 5'-triphosphate = RNA(n+1) + diphosphate. The catalysed reaction is ATP + H2O = ADP + phosphate + H(+). It carries out the reaction Thiol-dependent hydrolysis of ester, thioester, amide, peptide and isopeptide bonds formed by the C-terminal Gly of ubiquitin (a 76-residue protein attached to proteins as an intracellular targeting signal).. It catalyses the reaction a 5'-end (N(7)-methyl 5'-triphosphoguanosine)-ribonucleoside in mRNA + S-adenosyl-L-methionine = a 5'-end (N(7)-methyl 5'-triphosphoguanosine)-(2'-O-methyl-ribonucleoside) in mRNA + S-adenosyl-L-homocysteine + H(+). The enzyme catalyses uridylyl-uridylyl-ribonucleotide-RNA = a 3'-end uridylyl-2',3'-cyclophospho-uridine-RNA + a 5'-end dephospho-ribonucleoside-RNA. The catalysed reaction is a 5'-end diphospho-ribonucleoside in mRNA + GTP + H(+) = a 5'-end (5'-triphosphoguanosine)-ribonucleoside in mRNA + diphosphate. It carries out the reaction a 5'-end (5'-triphosphoguanosine)-ribonucleoside in mRNA + S-adenosyl-L-methionine = a 5'-end (N(7)-methyl 5'-triphosphoguanosine)-ribonucleoside in mRNA + S-adenosyl-L-homocysteine. Its function is as follows. The replicase polyprotein of coronaviruses is a multifunctional protein: it contains the activities necessary for the transcription of negative stranded RNA, leader RNA, subgenomic mRNAs and progeny virion RNA as well as proteinases responsible for the cleavage of the polyprotein into functional products. Inhibits host translation by interacting with the 40S ribosomal subunit. The nsp1-40S ribosome complex further induces an endonucleolytic cleavage near the 5'UTR of host mRNAs, targeting them for degradation. Viral mRNAs are not susceptible to nsp1-mediated endonucleolytic RNA cleavage thanks to the presence of a 5'-end leader sequence and are therefore protected from degradation. By suppressing host gene expression, nsp1 facilitates efficient viral gene expression in infected cells and evasion from host immune response. Functionally, may play a role in the modulation of host cell survival signaling pathway by interacting with host PHB and PHB2. Indeed, these two proteins play a role in maintaining the functional integrity of the mitochondria and protecting cells from various stresses. In terms of biological role, responsible for the cleavages located at the N-terminus of the replicase polyprotein. In addition, PL-PRO possesses a deubiquitinating/deISGylating activity and processes both 'Lys-48'- and 'Lys-63'-linked polyubiquitin chains from cellular substrates. Participates together with nsp4 in the assembly of virally-induced cytoplasmic double-membrane vesicles necessary for viral replication. Antagonizes innate immune induction of type I interferon by blocking the phosphorylation, dimerization and subsequent nuclear translocation of host IRF3. Also prevents host NF-kappa-B signaling. Its function is as follows. Participates in the assembly of virally-induced cytoplasmic double-membrane vesicles necessary for viral replication. Cleaves the C-terminus of replicase polyprotein at 11 sites. Recognizes substrates containing the core sequence [ILMVF]-Q-|-[SGACN]. Also able to bind an ADP-ribose-1''-phosphate (ADRP). Functionally, plays a role in the initial induction of autophagosomes from host endoplasmic reticulum. Later, limits the expansion of these phagosomes that are no longer able to deliver viral components to lysosomes. In terms of biological role, forms a hexadecamer with nsp8 (8 subunits of each) that may participate in viral replication by acting as a primase. Alternatively, may synthesize substantially longer products than oligonucleotide primers. Its function is as follows. Forms a hexadecamer with nsp7 (8 subunits of each) that may participate in viral replication by acting as a primase. Alternatively, may synthesize substantially longer products than oligonucleotide primers. Forms a primer, NSP9-pU, which is utilized by the polymerase for the initiation of RNA chains. Interacts with ribosome signal recognition particle RNA (SRP). Together with NSP8, suppress protein integration into the cell membrane, thereby disrupting host immune defenses. Functionally, plays a pivotal role in viral transcription by stimulating both nsp14 3'-5' exoribonuclease and nsp16 2'-O-methyltransferase activities. Therefore plays an essential role in viral mRNAs cap methylation. In terms of biological role, RNA-directed RNA polymerase that catalyzes the transcription of viral genomic and subgenomic RNAs. Acts in complex with nsp7 and nsp8 to transcribe both the minus and positive strands of genomic RNA. The kinase-like NiRAN domain of NSP12 attaches one or more nucleotides to the amino terminus of NSP9, forming a covalent RNA-protein intermediate that serves as transcription/replication primer. Subgenomic RNAs (sgRNAs) are formed by discontinuous transcription: The polymerase has the ability to pause at transcription-regulating sequences (TRS) and jump to the leader TRS, resulting in a major deletion. This creates a series of subgenomic RNAs that are replicated, transcribed and translated. In addition, Nsp12 is a subunit of the viral RNA capping enzyme that catalyzes the RNA guanylyltransferase reaction for genomic and sub-genomic RNAs. Subsequently, the NiRAN domain transfers RNA to GDP, and forms the core cap structure GpppA-RNA. Its function is as follows. Multi-functional protein with a zinc-binding domain in N-terminus displaying RNA and DNA duplex-unwinding activities with 5' to 3' polarity. Activity of helicase is dependent on magnesium. Plays a role in viral RNA synthesis through two distinct activities. The N7-guanine methyltransferase activity plays a role in the formation of the cap structure GpppA-RNA. The proofreading exoribonuclease reduces the sensitivity of the virus to RNA mutagens during replication. This activity acts on both ssRNA and dsRNA in a 3'-5' direction. Functionally, plays a role in viral transcription/replication and prevents the simultaneous activation of host cell dsRNA sensors, such as MDA5/IFIH1, OAS, and PKR. Acts by degrading the 5'-polyuridines generated during replication of the poly(A) region of viral genomic and subgenomic RNAs. Catalyzes a two-step reaction in which a 2'3'-cyclic phosphate (2'3'-cP) is first generated by 2'-O transesterification, which is then hydrolyzed to a 3'-phosphate (3'-P). If not degraded, poly(U) RNA would hybridize with poly(A) RNA tails and activate host dsRNA sensors. In terms of biological role, methyltransferase that mediates mRNA cap 2'-O-ribose methylation to the 5'-cap structure of viral mRNAs. N7-methyl guanosine cap is a prerequisite for binding of nsp16. Therefore plays an essential role in viral mRNAs cap methylation which is essential to evade immune system. This chain is Replicase polyprotein 1ab (rep), found in Bos taurus (Bovine).